Here is a 134-residue protein sequence, read N- to C-terminus: Large ribosomal subunit protein eL14y (134 aa).

The protein belongs to the eukaryotic ribosomal protein eL14 family.

This chain is Large ribosomal subunit protein eL14y (RPL14B), found in Arabidopsis thaliana (Mouse-ear cress).